Here is a 246-residue protein sequence, read N- to C-terminus: Lipoprotein-releasing system ATP-binding protein LolD 1 (246 aa).

The ABC transporter domain occupies 6–244; the sequence is LKLERIRKDL…ASVTNEAASL (239 aa). ATP is bound at residue 43–50; the sequence is GPSGSGKS.

The protein belongs to the ABC transporter superfamily. Lipoprotein translocase (TC 3.A.1.125) family. As to quaternary structure, the complex is composed of two ATP-binding proteins (LolD) and two transmembrane proteins (LolC and LolE).

It is found in the cell inner membrane. In terms of biological role, part of the ABC transporter complex LolCDE involved in the translocation of mature outer membrane-directed lipoproteins, from the inner membrane to the periplasmic chaperone, LolA. Responsible for the formation of the LolA-lipoprotein complex in an ATP-dependent manner. The chain is Lipoprotein-releasing system ATP-binding protein LolD 1 from Chlorobium chlorochromatii (strain CaD3).